Here is a 153-residue protein sequence, read N- to C-terminus: Endoribonuclease YbeY (153 aa).

Zn(2+) is bound by residues H114, H118, and H124.

It belongs to the endoribonuclease YbeY family. The cofactor is Zn(2+).

It is found in the cytoplasm. In terms of biological role, single strand-specific metallo-endoribonuclease involved in late-stage 70S ribosome quality control and in maturation of the 3' terminus of the 16S rRNA. The sequence is that of Endoribonuclease YbeY from Shewanella baltica (strain OS155 / ATCC BAA-1091).